The following is a 154-amino-acid chain: D-aminoacyl-tRNA deacylase (154 aa).

The Gly-cisPro motif, important for rejection of L-amino acids motif lies at 137-138 (GP).

The protein belongs to the DTD family. In terms of assembly, homodimer.

It is found in the cytoplasm. It catalyses the reaction glycyl-tRNA(Ala) + H2O = tRNA(Ala) + glycine + H(+). The enzyme catalyses a D-aminoacyl-tRNA + H2O = a tRNA + a D-alpha-amino acid + H(+). Functionally, an aminoacyl-tRNA editing enzyme that deacylates mischarged D-aminoacyl-tRNAs. Also deacylates mischarged glycyl-tRNA(Ala), protecting cells against glycine mischarging by AlaRS. Acts via tRNA-based rather than protein-based catalysis; rejects L-amino acids rather than detecting D-amino acids in the active site. By recycling D-aminoacyl-tRNA to D-amino acids and free tRNA molecules, this enzyme counteracts the toxicity associated with the formation of D-aminoacyl-tRNA entities in vivo and helps enforce protein L-homochirality. This Thermomicrobium roseum (strain ATCC 27502 / DSM 5159 / P-2) protein is D-aminoacyl-tRNA deacylase.